A 207-amino-acid polypeptide reads, in one-letter code: Guanylate kinase (207 aa).

The Guanylate kinase-like domain occupies 3 to 181; the sequence is GLLFVVSAAS…ALHDLESVIT (179 aa). 10 to 17 contacts ATP; that stretch reads AASGTGKT.

It belongs to the guanylate kinase family.

Its subcellular location is the cytoplasm. The enzyme catalyses GMP + ATP = GDP + ADP. In terms of biological role, essential for recycling GMP and indirectly, cGMP. In Acinetobacter baylyi (strain ATCC 33305 / BD413 / ADP1), this protein is Guanylate kinase.